Consider the following 265-residue polypeptide: Ubiquinone biosynthesis protein COQ4 homolog, mitochondrial (265 aa).

The N-terminal 30 residues, 1–30 (MATLLRPVLRRLCGLPGLQRPAAEMPLRAR), are a transit peptide targeting the mitochondrion. A Phosphoserine modification is found at S108. 4 residues coordinate Zn(2+): H163, D164, H167, and E179.

The protein belongs to the COQ4 family. In terms of assembly, component of a multi-subunit COQ enzyme complex, composed of at least COQ3, COQ4, COQ5, COQ6, COQ7 and COQ9. Requires Zn(2+) as cofactor. Expressed ubiquitously, but at high levels in liver, lung and pancreas.

Its subcellular location is the mitochondrion inner membrane. It carries out the reaction 4-hydroxy-3-methoxy-5-(all-trans-decaprenyl)benzoate + H(+) = 2-methoxy-6-(all-trans-decaprenyl)phenol + CO2. It functions in the pathway cofactor biosynthesis; ubiquinone biosynthesis. In terms of biological role, lyase that catalyzes the C1-decarboxylation of 4-hydroxy-3-methoxy-5-(all-trans-decaprenyl)benzoic acid into 2-methoxy-6-(all-trans-decaprenyl)phenol during ubiquinone biosynthesis. The protein is Ubiquinone biosynthesis protein COQ4 homolog, mitochondrial of Homo sapiens (Human).